Here is a 505-residue protein sequence, read N- to C-terminus: MRLRRLALFPGVALLLAAARLAAASDVLELTDDNFESRVSDTGSAGLMLVEFFAPWCGHCKRLAPEYEAAATRLKGIVPLAKVDCTANTNTCNKYGVSGYPTLKIFRDGEEAGAYDGPRTADGIVSHLKKQAGPASVPLRTEEEFKKFISDKDASVVGFFDDLFSEAHSEFLKAASNLRDNYRFAHTNVKSLVNEYDDNGEGIILFRPSHLTNKFEDKTVAYTEQKMTSGKIKKFIQENIFGICPHMTEDNKDLIQGKDLLIAYYDVDYEKNAKGSNYWRNRVMMVAKKFLDAGHKLNFAVASRKTFSHELSDFGLESTAGEIPVVAIRTAKGEKFVMQEEFSRDGKALERFLQDYFDGNLKRYLKSEPIPESNDGPVKVVVAENFDEIVNNENKDVLIEFYAPWCGHCKNLEPKYKELGEKLSKDPNIVIAKMDATANDVPSPYEVRGFPTIYFSPANKKLNPKKYEGGRELSDFISYLQREATNPPVIQEEKPKKKKKAQEDL.

Positions 1-24 are cleaved as a signal peptide; the sequence is MRLRRLALFPGVALLLAAARLAAA. Residues 25–133 form the Thioredoxin 1 domain; the sequence is SDVLELTDDN…IVSHLKKQAG (109 aa). Catalysis depends on nucleophile residues cysteine 57 and cysteine 60. A disulfide bridge connects residues cysteine 57 and cysteine 60. Lysine 61 is subject to N6-methyllysine. A disulfide bridge links cysteine 85 with cysteine 92. N6-succinyllysine is present on lysine 129. Position 152 is an N6-acetyllysine (lysine 152). N6-succinyllysine is present on lysine 218. Position 252 is an N6-acetyllysine (lysine 252). Threonine 319 bears the Phosphothreonine mark. Residues 343-485 form the Thioredoxin 2 domain; that stretch reads SRDGKALERF…FISYLQREAT (143 aa). At lysine 362 the chain carries N6-acetyllysine. Residues cysteine 406 and cysteine 409 each act as nucleophile in the active site. A disulfide bridge connects residues cysteine 406 and cysteine 409. Residues 484-505 form a disordered region; sequence ATNPPVIQEEKPKKKKKAQEDL. Residues 491-505 are compositionally biased toward basic and acidic residues; it reads QEEKPKKKKKAQEDL. Residue lysine 494 is modified to N6-acetyllysine. The Prevents secretion from ER motif lies at 502 to 505; it reads QEDL.

Belongs to the protein disulfide isomerase family. In terms of assembly, part of the major histocompatibility complex class I (MHC I) peptide loading complex composed of TAP1, TAP2, B2M, MHC heavy chain, TAPBP, PDIA3, and CALR. Interacts with ERP27 and CANX. Interacts with SERPINA2 and with SERPINA1. Interacts with ATP2A2. Within the major histocompatibility complex class I (MHC I) peptide loading complex forms reversible disulfide-linked heterodimers with TAPBP as part of its protein folding chaperone activity. This is essential to assist the dynamic assembly of the MHC I complex with high affinity antigens in the endoplasmic reticulum. In terms of processing, phosphorylated.

It is found in the endoplasmic reticulum. Its subcellular location is the endoplasmic reticulum lumen. The protein resides in the melanosome. The catalysed reaction is Catalyzes the rearrangement of -S-S- bonds in proteins.. Its function is as follows. Protein disulfide isomerase that catalyzes the formation, isomerization, and reduction or oxidation of disulfide bonds in client proteins and functions as a protein folding chaperone. Core component of the major histocompatibility complex class I (MHC I) peptide loading complex where it functions as an essential folding chaperone for TAPBP. Through TAPBP, assists the dynamic assembly of the MHC I complex with high affinity antigens in the endoplasmic reticulum. Therefore, plays a crucial role in the presentation of antigens to cytotoxic T cells in adaptive immunity. The polypeptide is Protein disulfide-isomerase A3 (PDIA3) (Chlorocebus aethiops (Green monkey)).